A 664-amino-acid chain; its full sequence is tRNA uridine 5-carboxymethylaminomethyl modification enzyme MnmG (664 aa).

Residues 14–19 (GGGHSG), Val-126, and Ser-183 contribute to the FAD site. 277–291 (GPRYCPSIEDKIDRF) is a binding site for NAD(+). FAD is bound at residue Gln-374.

Belongs to the MnmG family. As to quaternary structure, homodimer. Heterotetramer of two MnmE and two MnmG subunits. The cofactor is FAD.

It is found in the cytoplasm. Its function is as follows. NAD-binding protein involved in the addition of a carboxymethylaminomethyl (cmnm) group at the wobble position (U34) of certain tRNAs, forming tRNA-cmnm(5)s(2)U34. This chain is tRNA uridine 5-carboxymethylaminomethyl modification enzyme MnmG, found in Salinibacter ruber (strain DSM 13855 / M31).